A 218-amino-acid polypeptide reads, in one-letter code: Small ribosomal subunit protein uS3c (218 aa).

One can recognise a KH type-2 domain in the interval 47 to 118 (VQKEMRISSG…RLNVVITRVA (72 aa)).

Belongs to the universal ribosomal protein uS3 family. As to quaternary structure, part of the 30S ribosomal subunit.

Its subcellular location is the plastid. The protein resides in the chloroplast. The sequence is that of Small ribosomal subunit protein uS3c (rps3) from Ceratophyllum demersum (Rigid hornwort).